The sequence spans 133 residues: Holo-[acyl-carrier-protein] synthase (133 aa).

Mg(2+) is bound by residues Asp-8 and Glu-57.

This sequence belongs to the P-Pant transferase superfamily. AcpS family. Mg(2+) serves as cofactor.

Its subcellular location is the cytoplasm. The enzyme catalyses apo-[ACP] + CoA = holo-[ACP] + adenosine 3',5'-bisphosphate + H(+). Functionally, transfers the 4'-phosphopantetheine moiety from coenzyme A to a Ser of acyl-carrier-protein. The chain is Holo-[acyl-carrier-protein] synthase from Bartonella quintana (strain Toulouse) (Rochalimaea quintana).